Here is a 63-residue protein sequence, read N- to C-terminus: Protein Wfdc21 (63 aa).

The first 24 residues, 1-24, serve as a signal peptide directing secretion; sequence MKLGAFLLLVSLITLSLEVQELQA. The WAP; atypical domain occupies 25–63; that stretch reads AVRPLQLLGTCAELCRGDWDCGPEEQCVSIGCSHICTTN. Cystine bridges form between Cys-35–Cys-56, Cys-39–Cys-51, and Cys-45–Cys-60.

In terms of tissue distribution, predominantly expressed in white adipose tissue and liver.

Its subcellular location is the secreted. May promote activation of the metalloproteinase MMP2. The chain is Protein Wfdc21 from Mus musculus (Mouse).